The following is a 100-amino-acid chain: Small ribosomal subunit protein uS14c (100 aa).

The protein belongs to the universal ribosomal protein uS14 family. As to quaternary structure, part of the 30S ribosomal subunit.

Its subcellular location is the plastid. It localises to the chloroplast. In terms of biological role, binds 16S rRNA, required for the assembly of 30S particles. This Nasturtium officinale (Watercress) protein is Small ribosomal subunit protein uS14c.